A 63-amino-acid polypeptide reads, in one-letter code: ATP synthase subunit epsilon, mitochondrial (63 aa).

F-type ATP synthases have 2 components, the catalytic core F(1) and the membrane-embedded component F(0), linked together by a central stalk and a peripheral stalk. The central stalk, also called rotor shaft, is often seen as part of F(1). The peripheral stalk is seen as part of F(0). F(0) contains the membrane channel next to the rotor. F-type ATP synthases form dimers but each monomer functions independently in ATP generation. The dimer consists of 18 different polypeptides: ATP1 (subunit alpha, part of F(1), 3 molecules per monomer), ATP2 (subunit beta, part of F(1), 3 molecules per monomer), ATP3 (subunit gamma, part of the central stalk), ATP4 (subunit b, part of the peripheral stalk), ATP5/OSCP (subunit 5/OSCP, part of the peripheral stalk), ATP6 (subunit a, part of the peripheral stalk), ATP7 (subunit d, part of the peripheral stalk), ATP8 (subunit 8, part of the peripheral stalk), OLI1 (subunit c, part of the rotor, 10 molecules per monomer), ATP14 (subunit h, part of the peripheral stalk), ATP15 (subunit epsilon, part of the central stalk), ATP16 (subunit delta, part of the central stalk), ATP17 (subunit f, part of the peripheral stalk), ATP18 (subunit i/j, part of the peripheral stalk). Dimer-specific subunits are ATP19 (subunit k, at interface between monomers), ATP20 (subunit g, at interface between monomers), TIM11 (subunit e, at interface between monomers). Also contains subunit L.

The protein localises to the mitochondrion inner membrane. In terms of biological role, mitochondrial membrane ATP synthase (F(1)F(0) ATP synthase or Complex V) produces ATP from ADP in the presence of a proton gradient across the membrane which is generated by electron transport complexes of the respiratory chain. F-type ATP synthases consist of two structural domains, F(1) - containing the extramembraneous catalytic core, and F(0) - containing the membrane proton channel, linked together by a central stalk and a peripheral stalk. During catalysis, ATP synthesis in the catalytic domain of F(1) is coupled via a rotary mechanism of the central stalk subunits to proton translocation. Part of the complex F(1) domain and the central stalk which is part of the complex rotary element. Rotation of the central stalk against the surrounding alpha/ATP1(3)beta/ATP2(3) subunits leads to hydrolysis of ATP in three separate catalytic sites on the beta/ATP2 subunits. This chain is ATP synthase subunit epsilon, mitochondrial, found in Pichia angusta (Yeast).